Reading from the N-terminus, the 387-residue chain is Pepsin A-5 (387 aa).

An N-terminal signal peptide occupies residues 1–15; the sequence is MKWLWVLGLVALSEC. The propeptide at 16–62 is activation peptide; sequence LVKIPLMKIKSMRENLRESQVLKDYLEKYPRSRAHVLLEQRRNPAVT. In terms of domain architecture, Peptidase A1 spans 74 to 384; it reads YIGIISIGTP…DRANNRIGLA (311 aa). Asp-92 is an active-site residue. 2 cysteine pairs are disulfide-bonded: Cys-105–Cys-110 and Cys-266–Cys-270. Asp-275 is a catalytic residue. A disulfide bridge connects residues Cys-309 and Cys-343.

Belongs to the peptidase A1 family. In terms of tissue distribution, expressed in glandular chief cells of the neonatal stomach. Expressed in yolk sacs of the placenta (at protein level).

It localises to the secreted. The enzyme catalyses Preferential cleavage: hydrophobic, preferably aromatic, residues in P1 and P1' positions. Cleaves 1-Phe-|-Val-2, 4-Gln-|-His-5, 13-Glu-|-Ala-14, 14-Ala-|-Leu-15, 15-Leu-|-Tyr-16, 16-Tyr-|-Leu-17, 23-Gly-|-Phe-24, 24-Phe-|-Phe-25 and 25-Phe-|-Tyr-26 bonds in the B chain of insulin.. Inhibited by pepstatin A. Its function is as follows. Shows particularly broad specificity; although bonds involving phenylalanine and leucine are preferred, many others are also cleaved to some extent. May play a role as a specialized neonatal digestive enzyme. This chain is Pepsin A-5, found in Mus musculus (Mouse).